Here is a 417-residue protein sequence, read N- to C-terminus: Tryptophan synthase beta chain (417 aa).

Residue K108 is modified to N6-(pyridoxal phosphate)lysine.

It belongs to the TrpB family. In terms of assembly, tetramer of two alpha and two beta chains. Pyridoxal 5'-phosphate serves as cofactor.

It carries out the reaction (1S,2R)-1-C-(indol-3-yl)glycerol 3-phosphate + L-serine = D-glyceraldehyde 3-phosphate + L-tryptophan + H2O. It participates in amino-acid biosynthesis; L-tryptophan biosynthesis; L-tryptophan from chorismate: step 5/5. Its function is as follows. The beta subunit is responsible for the synthesis of L-tryptophan from indole and L-serine. This is Tryptophan synthase beta chain (trpB) from Mycobacterium leprae (strain TN).